The primary structure comprises 207 residues: Large ribosomal subunit protein uL4 (207 aa).

A disordered region spans residues 43–85 (SRRQGTHDTKGRSEVRGGGRKPWKQKGTGRARQGSIRSPQWVG). Residues 47-59 (GTHDTKGRSEVRG) show a composition bias toward basic and acidic residues. Basic residues predominate over residues 60-71 (GGRKPWKQKGTG).

The protein belongs to the universal ribosomal protein uL4 family. Part of the 50S ribosomal subunit.

Its function is as follows. One of the primary rRNA binding proteins, this protein initially binds near the 5'-end of the 23S rRNA. It is important during the early stages of 50S assembly. It makes multiple contacts with different domains of the 23S rRNA in the assembled 50S subunit and ribosome. Functionally, forms part of the polypeptide exit tunnel. The protein is Large ribosomal subunit protein uL4 of Exiguobacterium sibiricum (strain DSM 17290 / CCUG 55495 / CIP 109462 / JCM 13490 / 255-15).